Reading from the N-terminus, the 696-residue chain is SEC14-like protein 5 (696 aa).

Positions 2–175 (VQRYQSPVRV…YLNELISQGT (174 aa)) constitute a PRELI/MSF1 domain. Positions 178-214 (IPRWTPAPVREEDARNQAGPRDPSSLEAHGPRSTLGP) are disordered. The region spanning 306–482 (PPALLEEFYA…FLGGESVCNV (177 aa)) is the CRAL-TRIO domain. The GOLD domain maps to 509-653 (SETYHSASVL…KCKLLYYCEV (145 aa)).

This Homo sapiens (Human) protein is SEC14-like protein 5 (SEC14L5).